Consider the following 93-residue polypeptide: Small ribosomal subunit protein bS20 (93 aa).

The protein belongs to the bacterial ribosomal protein bS20 family.

Its function is as follows. Binds directly to 16S ribosomal RNA. The protein is Small ribosomal subunit protein bS20 of Hydrogenobaculum sp. (strain Y04AAS1).